Reading from the N-terminus, the 979-residue chain is Putative cellulose synthase-like protein D6 (979 aa).

A disordered region spans residues 1–24 (MMDGESPLRHPRISHVSNSGSDFG). Residues 14 to 24 (SHVSNSGSDFG) are compositionally biased toward low complexity. 2 helical membrane passes run 116–136 (IIIA…ALFL) and 147–167 (ALWL…SWLL). Residues Asp247 and Asp683 contribute to the active site. Transmembrane regions (helical) follow at residues 765 to 785 (IFIL…HFVV), 788 to 808 (LTGS…GLAV), 837 to 857 (LVAV…SFTL), 882 to 902 (ALMI…LFAV), 913 to 933 (WSNL…MYPF), and 946 to 966 (TVVY…YITI).

The protein belongs to the glycosyltransferase 2 family. Plant cellulose synthase-like D subfamily.

The protein resides in the golgi apparatus membrane. In terms of biological role, thought to be a Golgi-localized beta-glycan synthase that polymerize the backbones of noncellulosic polysaccharides (hemicelluloses) of plant cell wall. In Arabidopsis thaliana (Mouse-ear cress), this protein is Putative cellulose synthase-like protein D6 (CSLD6).